We begin with the raw amino-acid sequence, 218 residues long: Pyridoxine/pyridoxamine 5'-phosphate oxidase (218 aa).

Substrate is bound by residues 14 to 17 and Lys-72; that span reads RREY. FMN contacts are provided by residues 67 to 72, 82 to 83, Arg-88, Lys-89, and Gln-111; these read RIVLLK and YT. Substrate-binding residues include Tyr-129, Arg-133, and Ser-137. FMN is bound by residues 146 to 147 and Trp-191; that span reads QS. 197–199 is a substrate binding site; sequence RLH. Residue Arg-201 participates in FMN binding.

It belongs to the pyridoxamine 5'-phosphate oxidase family. Homodimer. The cofactor is FMN.

It carries out the reaction pyridoxamine 5'-phosphate + O2 + H2O = pyridoxal 5'-phosphate + H2O2 + NH4(+). The enzyme catalyses pyridoxine 5'-phosphate + O2 = pyridoxal 5'-phosphate + H2O2. It functions in the pathway cofactor metabolism; pyridoxal 5'-phosphate salvage; pyridoxal 5'-phosphate from pyridoxamine 5'-phosphate: step 1/1. Its pathway is cofactor metabolism; pyridoxal 5'-phosphate salvage; pyridoxal 5'-phosphate from pyridoxine 5'-phosphate: step 1/1. Catalyzes the oxidation of either pyridoxine 5'-phosphate (PNP) or pyridoxamine 5'-phosphate (PMP) into pyridoxal 5'-phosphate (PLP). The sequence is that of Pyridoxine/pyridoxamine 5'-phosphate oxidase from Salmonella typhi.